The chain runs to 375 residues: MAQLCVALVAGEASGDILGSGLMRALKARHPDVRFIGVGGPLMEAEGLQSYFPMERLAVMGLVEVLGRLRELLKRRKLLIQTLIDEKPDVFIGIDAPDFTLNIELKLRQAGIKTVHYVSPSVWAWRQKRVLKIREGCDLMLTLLPFEARFYEEQGVPVRFVGHPLADTIPLEADRSVARAALGLGEGPIVALMPGSRGGEVGRLGALFLDAAEHLCQQVPGVRFVLPCANAARRAQVEHMLEGRQLPLTLLDGQSHQALAACDAVLIASGTATLEALLYKRPMVVAYRLAPLTYWILKRLVKSPYVSLPNLLAQRELVPELLQDQATSQALANTLAPLVRDGSQQTERFDEIHRTLRRDASNQAAEAVLALLKDR.

Belongs to the LpxB family.

The enzyme catalyses a lipid X + a UDP-2-N,3-O-bis[(3R)-3-hydroxyacyl]-alpha-D-glucosamine = a lipid A disaccharide + UDP + H(+). It participates in bacterial outer membrane biogenesis; LPS lipid A biosynthesis. Its function is as follows. Condensation of UDP-2,3-diacylglucosamine and 2,3-diacylglucosamine-1-phosphate to form lipid A disaccharide, a precursor of lipid A, a phosphorylated glycolipid that anchors the lipopolysaccharide to the outer membrane of the cell. The chain is Lipid-A-disaccharide synthase from Pseudomonas putida (strain GB-1).